We begin with the raw amino-acid sequence, 478 residues long: Trigger factor (478 aa).

One can recognise a PPIase FKBP-type domain in the interval 162–243; sequence GDFVSIDLSA…VKSIKERELP (82 aa). A disordered region spans residues 424 to 478; the sequence is KDTDGNDIDTTEFFGPSGGAQAEAEGADEADADSDADSDTEADSDTEADEADEAK. Residues 448–478 show a composition bias toward acidic residues; it reads EGADEADADSDADSDTEADSDTEADEADEAK.

It belongs to the FKBP-type PPIase family. Tig subfamily.

It localises to the cytoplasm. The enzyme catalyses [protein]-peptidylproline (omega=180) = [protein]-peptidylproline (omega=0). Its function is as follows. Involved in protein export. Acts as a chaperone by maintaining the newly synthesized protein in an open conformation. Functions as a peptidyl-prolyl cis-trans isomerase. In Mycobacterium sp. (strain KMS), this protein is Trigger factor.